The sequence spans 1290 residues: 1-phosphatidylinositol 4,5-bisphosphate phosphodiesterase gamma-1 (1290 aa).

Position 2 is an N-acetylalanine (Ala2). In terms of domain architecture, PH 1 spans 27–142 (RSLEVGTVMT…WIKGLTWLME (116 aa)). The 36-residue stretch at 152–187 (QIERWLRKQFYSVDRNREDRISAKDLKNMLSQVNYR) folds into the EF-hand domain. 5 residues coordinate Ca(2+): Asp165, Asn167, Glu169, Arg171, and Asp176. The 145-residue stretch at 320–464 (DTMNNPLSHY…LKRKILIKHK (145 aa)) folds into the PI-PLC X-box domain. Active-site residues include His335 and His380. Positions 489–523 (SIKNGILYLEDPVNHEWYPHYFVLTSSKIYYSEET) constitute a PH 2; first part domain. The residue at position 506 (Tyr506) is a Phosphotyrosine. Positions 522 to 544 (ETSSDQGNEDEEEPKEVSSSTEL) are disordered. 2 consecutive SH2 domains span residues 550-657 (WFHG…SEPV) and 668-756 (WYHA…RYPI). A Phosphotyrosine; by SYK modification is found at Tyr771. Tyr775 is subject to Phosphotyrosine. Tyr783 carries the post-translational modification Phosphotyrosine; by ITK, SYK and TXK. Residues 791-851 (TFKCAVKALF…PSNYVEEMVN (61 aa)) form the SH3 domain. Residues 895–931 (FVFSISMASVAHWSLDVAADSQEELQDWVKKIREVAQ) enclose the PH 2; second part domain. In terms of domain architecture, PI-PLC Y-box spans 953-1070 (LSELVVYCRP…GYVLQPSTMR (118 aa)). The residue at position 977 (Tyr977) is a Phosphotyrosine. The region spanning 1071–1194 (DEAFDPFDKS…TGYRAVPLKN (124 aa)) is the C2 domain. 5 positions are modified to phosphoserine: Ser1221, Pro1222, Ser1227, Ser1233, and Ser1248. Tyr1253 carries the post-translational modification Phosphotyrosine. Residue Ser1263 is modified to Phosphoserine. The tract at residues 1271 to 1290 (FDSRERRAPRRTRVNGDNRL) is disordered.

In terms of assembly, interacts with AGAP2 via its SH3 domain. Interacts (via SH2 domain) with RET. Interacts with FLT1 (tyrosine-phosphorylated). Interacts (via SH2 domain) with FGFR1, FGFR2, FGFR3 and FGFR4 (phosphorylated). Interacts with LAT (phosphorylated) upon TCR activation. Interacts (via SH3 domain) with the Pro-rich domain of TNK1. Associates with BLNK, VAV1, GRB2 and NCK1 in a B-cell antigen receptor-dependent fashion. Interacts with CBLB in activated T-cells; which inhibits phosphorylation. Interacts with SHB. Interacts (via SH3 domain) with the Arg/Gly-rich-flanked Pro-rich domains of KHDRBS1/SAM68. This interaction is selectively regulated by arginine methylation of KHDRBS1/SAM68. Interacts with INPP5D/SHIP1, THEMIS and CLNK. Interacts with AXL, FLT4 and KIT. Interacts with RALGPS1. Interacts (via the SH2 domains) with VIL1 (phosphorylated at C-terminus tyrosine phosphorylation sites). Interacts (via SH2 domain) with PDGFRA and PDGFRB (tyrosine phosphorylated). Interacts with PIP5K1C. Interacts with NTRK1 and NTRK2 (phosphorylated upon ligand-binding). Interacts with SYK; activates PLCG1. Interacts with GRB2, LAT and THEMIS upon TCR activation in thymocytes. Interacts with TESPA1; the association is increased with prolonged stimulation of the TCR and may facilitate the assembly of the LAT signalosome. Interacts (via C-terminal proline-rich domain (PRD)) with PLCG1 (via SH3 domain); this interaction leads to guanine nucleotide exchange from PlCG1 to DNM1 and enhances DNM1-dependent endocytosis. As to quaternary structure, (Microbial infection) Interacts (via SH3 domain) with HEV ORF3 protein. It depends on Ca(2+) as a cofactor. Post-translationally, tyrosine phosphorylated in response to signaling via activated FLT3, KIT and PDGFRA. Tyrosine phosphorylated by activated FGFR1, FGFR2, FGFR3 and FGFR4. Tyrosine phosphorylated by activated FLT1 and KDR. Tyrosine phosphorylated by activated PDGFRB. The receptor-mediated activation of PLCG1 involves its phosphorylation by tyrosine kinases, in response to ligation of a variety of growth factor receptors and immune system receptors. For instance, SYK phosphorylates and activates PLCG1 in response to ligation of the B-cell receptor. May be dephosphorylated by PTPRJ. Phosphorylated by ITK and TXK on Tyr-783 upon TCR activation in T-cells. Ubiquitinated by CBLB in activated T-cells.

The protein localises to the cell projection. It localises to the lamellipodium. Its subcellular location is the ruffle. It carries out the reaction a 1,2-diacyl-sn-glycero-3-phospho-(1D-myo-inositol-4,5-bisphosphate) + H2O = 1D-myo-inositol 1,4,5-trisphosphate + a 1,2-diacyl-sn-glycerol + H(+). The catalysed reaction is a 1,2-diacyl-sn-glycero-3-phospho-(1D-myo-inositol) + H2O = 1D-myo-inositol 1-phosphate + a 1,2-diacyl-sn-glycerol + H(+). With respect to regulation, activated by phosphorylation on tyrosine residues. In terms of biological role, mediates the production of the second messenger molecules diacylglycerol (DAG) and inositol 1,4,5-trisphosphate (IP3). Plays an important role in the regulation of intracellular signaling cascades. Becomes activated in response to ligand-mediated activation of receptor-type tyrosine kinases, such as PDGFRA, PDGFRB, EGFR, FGFR1, FGFR2, FGFR3 and FGFR4. Plays a role in actin reorganization and cell migration. Guanine nucleotide exchange factor that binds the GTPase DNM1 and catalyzes the dissociation of GDP, allowing a GTP molecule to bind in its place, therefore enhancing DNM1-dependent endocytosis. The protein is 1-phosphatidylinositol 4,5-bisphosphate phosphodiesterase gamma-1 of Homo sapiens (Human).